The following is a 2572-amino-acid chain: MATLNSASTTGTTPSPGHNAPSLPSDTFSSSTPSDPVTKDPPAASSTSENMRSSEPGGQLLESGCGLVPPKEIGEPQEGPDCGHFPPNDPGVEKDKEQEEEEEGLPPMDLSNHLFFTAGGEAYLVAKLSLPGGSELLLPKGFPWGEAGIKEEPSLPFLAYPPPSHLTALHIQHGFDPIQGFSSSDQILSHDTSAPSPAACEERHGAFWSYQLAPNPPGDPKDGPMGNSGGNHVAVFWLCLLCRLGFSKPQAFMDHTQSHGVKLTPAQYQGLSGSPAVLQEGDEGCKALISFLEPKLPARPSSDIPLDNSSTVNMEANVAQTEDGPPEAEVQALILLDEEVMALSPPSPPTATWDPSPTQAKESPVAAGEAGPDWFPEGQEEDGGLCPPLNQSSPTSKEGGTLPAPVGSPEDPSDPPQPYRLADDYTPAPAAFQGLSLSSHMSLLHSRNSCKTLKCPKCNWHYKYQQTLDVHMREKHPESNSHCSYCSAGGAHPRLARGESYNCGYKPYRCDVCNYSTTTKGNLSIHMQSDKHLANLQGFQAGPGGQGSPPEASLPPSAGDKEPKTKSSWQCKVCSYETNISRNLRIHMTSEKHMQNVLMLHQGLPLGLPPGLMGPGPPPPPGATPTSPPELFQYFGPQALGQPQTPLAGPGLRPDKPLEAQLLLNGFHHVGAPARKFPTSAPGSLSPDAHLPPSQLLGSSSDSLPTSPPPDDSLSLKVFRCLVCQAFSTDSLELLLYHCSIGRSLPEAEWKEVAGDTHRCKLCCYGTQLKANFQLHLKTDKHAQKYQLAAHLREGGGAMGTPSPASLGDGAPYGSVSPLHLRCNICDFESNSKEKMQLHARGAAHEENSQIYKFLLDMEGAEAGAELGLYHCLLCAWETPSRLAVLQHLRTPAHRDAQAQRRLQLLQNGPTTEEGLAALQSILSFSHGQLRTPGKAPVTPLAEPPTPEKDAQNKTEQLASEETENKTGPSRDSANQTTVYCCPYCSFLSPESSQVRAHTLSQHAVQPKYRCPLCQEQLVGRPALHFHLSHLHNVVPECVEKLLLVATTVEMTFTTKVLSAPTLSPLDNGQEPPTHGPEPTPSRDQAAEGPNLTPEASPDPLPEPPLASVEVPDKPSGSPGQPPSPAPSPVPEPDAQAEDVAPPPTMAEEEEGTTGELRSAEPAPADSRHPLTYRKTTNFALDKFLDPARPYKCTVCKESFTQKNILLVHYNSVSHLHKMKKAAIDPSAPARGEAGAPPTTTAATDKPFKCTVCRVSYNQSSTLEIHMRSVLHQTRSRGTKTDSKIEGPERSQEEPKEGETEGEVGTEKKGPDTSGFISGLPFLSPPPPPLDLHRFPAPLFTPPVLPPFPLVPESLLKLQQQQLLLPFYLHDLKVGPKLTLAGPAPVLSLPAATPPPPPQPPKAELAEREWERPPMAKEGNEAGPSSPPDPLPNEAARTAAKALLENFGFELVIQYNEGKQAVPPPPTPPPPEALGGGDKLACGACGKLFSNMLILKTHEEHVHRRFLPFEALSRYAAQFRKSYDSLYPPLAEPPKPPDGSLDSPVPHLGPPFLVPEPEAGGTRAPEERSRAGGHWPIEEEESSRGNLPPLVPAGRRFSRTKFTEFQTQALQSFFETSAYPKDGEVERLASLLGLASRVVVVWFQNARQKARKNACEGGSMPTGGGTGGASGCRRCHATFSCVFELVRHLKKCYDDQTLEEEEEEAERGEEEEEVEEEEVEEEQGLEPPAGPEGPLPEPPDGEELSQAEATKAGGKEPEEKATPSPSPAHTCDQCAISFSSQDLLTSHRRLHFLPSLQPSAPPQLLDLPLLVFGERNPLVAATSPMPGPPLKRKHEDGSLSPTGSEAGGGGEGEPPRDKRLRTTILPEQLEILYRWYMQDSNPTRKMLDCISEEVGLKKRVVQVWFQNTRARERKGQFRSTPGGVPSPAVKPPATATPASLPKFNLLLGKVDDGTGREAPKREAPAFPYPTATLASGPQPFLPPGKEATTPTPEPPLPLLPPPPPSEEEGPEEPPKASPESEACSLSAGDLSDSSASSLAEPESPGAGGTSGGPGGGTGVPDGMGQRRYRTQMSSLQLKIMKACYEAYRTPTMQECEVLGEEIGLPKRVIQVWFQNARAKEKKAKLQGTAAGSTGGSSEGLLAAQRTDCPYCDVKYDFYVSCRGHLFSRQHLAKLKEAVRAQLKSESKCYDLAPAPEAPPALKAPPATTPASMPLGAAPTLPRLAPVLLSGPALAQPPLGNLAPFNSGPAASSGLLGLATSVLPTTTVVQTAGPGRPLPQRPMPDQTNTSTAGTTDPVPGPPTEPLGDKVSSERKPVAGPTSSSNDALKNLKALKTTVPALLGGQFLPFPLPPAGGTAPPAVFGPQLQGAYFQQLYGMKKGLFPMNPMIPQTLIGLLPNALLQPPPQPPEPTATAPPKPPELPAPGEGEAGEVDELLTGSTGISTVDVTHRYLCRQCKMAFDGEAPATAHQRSFCFFGRGSGGSMPPPLRVPICTYHCLACEVLLSGREALASHLRSSAHRRKAAPPQGGPPISITNAATAASAAVAFAKEEARLPHTDSNPKTTTTSTLLAL.

2 disordered regions span residues 1–107 and 343–425; these read MATL…GLPP and LSPP…ADDY. Over residues 8-36 the composition is skewed to low complexity; the sequence is STTGTTPSPGHNAPSLPSDTFSSSTPSDP. Composition is skewed to polar residues over residues 44-53 and 389-398; these read ASSTSENMRS and LNQSSPTSKE. 2 C2H2-type zinc fingers span residues 453–476 and 508–532; these read LKCP…REKH and YRCD…SDKH. Disordered stretches follow at residues 537-566, 608-655, and 675-710; these read QGFQ…PKTK, LPPG…LRPD, and RKFP…SPPP. The segment covering 615-628 has biased composition (pro residues); the sequence is PGPPPPPGATPTSP. A compositionally biased stretch (low complexity) spans 696–705; it reads LLGSSSDSLP. 2 consecutive C2H2-type zinc fingers follow at residues 821 to 845 and 870 to 894; these read LRCN…GAAH and YHCL…TPAH. A disordered region spans residues 929-974; it reads QLRTPGKAPVTPLAEPPTPEKDAQNKTEQLASEETENKTGPSRDSA. The span at 954 to 974 shows a compositional bias: polar residues; it reads KTEQLASEETENKTGPSRDSA. Residues 1009 to 1032 form a C2H2-type 5 zinc finger; it reads YRCPLCQEQLVGRPALHFHLSHLH. The interval 1061–1171 is disordered; sequence PTLSPLDNGQ…PAPADSRHPL (111 aa). Over residues 1120–1132 the composition is skewed to pro residues; the sequence is GQPPSPAPSPVPE. 2 consecutive C2H2-type zinc fingers follow at residues 1191–1217 and 1248–1272; these read YKCT…SHLH and FKCT…SVLH. Disordered stretches follow at residues 1269–1325, 1389–1408, and 1415–1434; these read SVLH…FLSP, LPAA…LAER, and MAKE…LPNE. Positions 1279 to 1311 are enriched in basic and acidic residues; that stretch reads TKTDSKIEGPERSQEEPKEGETEGEVGTEKKGP. Over residues 1392 to 1401 the composition is skewed to pro residues; it reads ATPPPPPQPP. The C2H2-type 8 zinc finger occupies 1480–1503; that stretch reads LACGACGKLFSNMLILKTHEEHVH. The segment at 1528 to 1591 is disordered; it reads PPLAEPPKPP…SSRGNLPPLV (64 aa). The homeobox 1 DNA-binding region spans 1595-1654; that stretch reads RRFSRTKFTEFQTQALQSFFETSAYPKDGEVERLASLLGLASRVVVVWFQNARQKARKNA. A C2H2-type 9; degenerate zinc finger spans residues 1670–1696; the sequence is SGCRRCHATFSCVFELVRHLKKCYDDQ. The segment covering 1696 to 1724 has biased composition (acidic residues); it reads QTLEEEEEEAERGEEEEEVEEEEVEEEQG. 5 disordered regions span residues 1696–1769, 1820–1860, 1912–2065, 2268–2327, and 2398–2431; these read QTLE…SPAH, AATS…DKRL, ERKG…GMGQ, VQTA…NDAL, and NALL…EAGE. Residues 1728–1738 are compositionally biased toward pro residues; it reads PAGPEGPLPEP. A C2H2-type 10 zinc finger spans residues 1769–1791; the sequence is HTCDQCAISFSSQDLLTSHRRLH. A DNA-binding region (homeobox 2) is located at residues 1857–1916; sequence DKRLRTTILPEQLEILYRWYMQDSNPTRKMLDCISEEVGLKKRVVQVWFQNTRARERKGQ. Low complexity predominate over residues 1925 to 1939; that stretch reads PSPAVKPPATATPAS. Residues 1949 to 1963 are compositionally biased toward basic and acidic residues; that stretch reads KVDDGTGREAPKREA. Positions 1991–2004 are enriched in pro residues; that stretch reads TPEPPLPLLPPPPP. A compositionally biased stretch (low complexity) spans 2017–2044; the sequence is SPESEACSLSAGDLSDSSASSLAEPESP. Gly residues predominate over residues 2045–2061; the sequence is GAGGTSGGPGGGTGVPD. The homeobox 3 DNA-binding region spans 2065–2124; the sequence is QRRYRTQMSSLQLKIMKACYEAYRTPTMQECEVLGEEIGLPKRVIQVWFQNARAKEKKAK. The span at 2284–2293 shows a compositional bias: polar residues; it reads DQTNTSTAGT. Positions 2305–2315 are enriched in basic and acidic residues; it reads LGDKVSSERKP. A compositionally biased stretch (pro residues) spans 2402–2422; sequence QPPPQPPEPTATAPPKPPELP. A C2H2-type 11; degenerate zinc finger spans residues 2451-2471; sequence YLCRQCKMAFDGEAPATAHQR. Residues 2495–2519 form a C2H2-type 12 zinc finger; sequence YHCLACEVLLSGREALASHLRSSAH. The interval 2551–2572 is disordered; that stretch reads EARLPHTDSNPKTTTTSTLLAL. A compositionally biased stretch (low complexity) spans 2563-2572; it reads TTTTSTLLAL.

The protein localises to the nucleus. In terms of biological role, transcriptional regulator that is critical for the regulation of pain perception and processing of noxious stimuli. In Homo sapiens (Human), this protein is Zinc finger homeobox protein 2 (ZFHX2).